Consider the following 347-residue polypeptide: Heat-inducible transcription repressor HrcA (347 aa).

This sequence belongs to the HrcA family.

Its function is as follows. Negative regulator of class I heat shock genes (grpE-dnaK-dnaJ and groELS operons). Prevents heat-shock induction of these operons. This is Heat-inducible transcription repressor HrcA from Desulforamulus reducens (strain ATCC BAA-1160 / DSM 100696 / MI-1) (Desulfotomaculum reducens).